A 299-amino-acid polypeptide reads, in one-letter code: Fibrinogen silencer-binding protein (299 aa).

K94 is covalently cross-linked (Glycyl lysine isopeptide (Lys-Gly) (interchain with G-Cter in SUMO2)).

In terms of assembly, interacts with APBA1 (via PDZ 1 and 2 domains). In terms of tissue distribution, expressed in multiple tissues including brain.

The protein resides in the nucleus. Transcriptional repressor that down-regulates the expression of the fibrinogen gamma chain. Represses transcription of GSK3B gene promoter via its interaction with APBA1. The sequence is that of Fibrinogen silencer-binding protein (FSBP) from Homo sapiens (Human).